Consider the following 935-residue polypeptide: Myocardin (935 aa).

The MEF2C-binding signature appears at 12 to 27 (IRRKFRSVLQLRLQQR). RPEL repeat units follow at residues 18-43 (SVLQLRLQQRRTQEQLANQGLIPPLK), 62-87 (DSLRRKGRNRSDRASLVTMHILQAST), and 106-131 (DDLNEKIALRPGPLELVEKNILPMDS). Residues 37–73 (GLIPPLKGPTEFHDPRKQLDSAKTEDSLRRKGRNRSD) are disordered. Over residues 46-73 (TEFHDPRKQLDSAKTEDSLRRKGRNRSD) the composition is skewed to basic and acidic residues. The HDAC5-binding stretch occupies residues 153 to 201 (FEDDSSRDGLSPDQARSEDPQGSTGSTPDIKSTEAPLDTIQDLTPGSES). The disordered stretch occupies residues 155 to 283 (DDSSRDGLSP…SPPPMDSAYA (129 aa)). 2 stretches are compositionally biased toward polar residues: residues 172 to 182 (PQGSTGSTPDI) and 206 to 216 (AASQPGNQSDP). Positions 244 to 261 (NRHKKPKDPKPKVKKLKY) are enriched in basic residues. Residues 287–322 (QQQQLFLQLQILSQQQQQQQQQQQQQQQQQQQQQRF) adopt a coiled-coil conformation. Positions 337-378 (EQMARNPNPSSTPLSNTPLSPVKNSISGQTGVSSLKPGPLPP) are disordered. The segment covering 342-357 (NPNPSSTPLSNTPLSP) has biased composition (low complexity). Residues 358–369 (VKNSISGQTGVS) are compositionally biased toward polar residues. In terms of domain architecture, SAP spans 380 to 414 (LDDLKVSELRQQLRIRGLPVSGTKTALVDRLRPFQ). Ser-454, Ser-458, Ser-462, and Ser-466 each carry phosphoserine; by GSK3-beta. The tract at residues 498 to 518 (ESLLSSLNGGSGPSEPDGLDS) is disordered. Residues 519–563 (EKDKMLVEKQKVINQLTWKLRQEQRQVEELRMQLQKQKSSCSDQK) are a coiled coil. The tract at residues 579–605 (SCPFAPQQASGKGQGHSSDSPPPACET) is disordered. Over residues 585–597 (QQASGKGQGHSSD) the composition is skewed to polar residues. Ser-624, Ser-628, Ser-632, and Ser-636 each carry phosphoserine; by GSK3-beta. A disordered region spans residues 654 to 731 (NNHYFLASSS…DAVKQQMTRS (78 aa)). The span at 660-691 (ASSSGAQRENHGVSSPSSSQGCAQMTGLQSSD) shows a compositional bias: polar residues. Low complexity predominate over residues 695–709 (PTFSIPSPTFSKSSS). The tract at residues 714 to 935 (ITQPPSYEDA…SPMDLHLQQW (222 aa)) is required for interaction with and ubiquitination by STUB1. Residues Ser-812, Ser-859, and Ser-866 each carry the phosphoserine; by MAPK1 and MAPK3 modification. Thr-893 bears the Phosphothreonine; by MAPK1 and MAPK3 mark.

In terms of assembly, homodimer. Interacts with MLLT7/FOXO4. Interacts with SRF, its association does not depend on specific DNA sequences for ternary complex formation. Interacts (via C-terminal) with EP300 (via CREB-binding domain). Interacts with HDAC4 and HDAC5. Interacts with MEF2C. Interacts (via C-terminus) with STUB1/CHIP. Interacts with PURB. Ubiquitinated; by STUB1/CHIP at the C-terminus, leading to its degradation by the proteasome. Phosphorylation by GSK3B is required for STUB1/CHIP-mediated ubiquitination. In terms of processing, phosphorylation negatively regulates transcriptional activity. Phosphorylated; by GSK3B. In terms of tissue distribution, expressed in smooth muscle cell-containing tissues. Expressed in the heart. Expressed in the aorta and bladder. Weakly expression in the lung, testis and kidney. Weakly expressed in the stomach. Weakly expressed in the intestine and colon. As to expression, expressed in the heart. Predominantly expressed in cardiac muscle. In terms of tissue distribution, predominantly expressed in smooth muscle cell-rich tissues.

It is found in the nucleus speckle. Functionally, smooth muscle cells (SM) and cardiac muscle cells-specific transcriptional factor which uses the canonical single or multiple CArG boxes DNA sequence. Acts as a cofactor of serum response factor (SRF) with the potential to modulate SRF-target genes. Plays a crucial role in cardiogenesis, urinary bladder development, and differentiation of the smooth muscle cell lineage (myogenesis). Positively regulates the transcription of genes involved in vascular smooth muscle contraction. In terms of biological role, positively regulates the activation of smooth muscle cell gene promoter regions. Its function is as follows. Positively regulates the activation of smooth muscle cell gene promoter regions. Activation of the MYH6 promoter is enhanced in the presence of MEF2C. This Mus musculus (Mouse) protein is Myocardin (Myocd).